A 212-amino-acid chain; its full sequence is Probable GTP-binding protein EngB (212 aa).

The EngB-type G domain occupies 38–210 (SLPEIAFVGK…KASLAKCIKP (173 aa)). GTP contacts are provided by residues 46 to 53 (GKSNVGKS), 73 to 77 (GRTRQ), 91 to 94 (DLPG), 158 to 161 (TKSD), and 189 to 191 (VSN). Mg(2+) contacts are provided by S53 and T75.

This sequence belongs to the TRAFAC class TrmE-Era-EngA-EngB-Septin-like GTPase superfamily. EngB GTPase family. It depends on Mg(2+) as a cofactor.

Its function is as follows. Necessary for normal cell division and for the maintenance of normal septation. This chain is Probable GTP-binding protein EngB, found in Rickettsia conorii (strain ATCC VR-613 / Malish 7).